The sequence spans 743 residues: Probable TonB-dependent receptor BfrD (743 aa).

The first 30 residues, 1 to 30 (MKFYSSHPMPESLAAAIAVPLLGLLPAAQA), serve as a signal peptide directing secretion. In terms of domain architecture, TBDR plug spans 62–168 (PLADTPRTVQ…AGGSINLVTK (107 aa)). A TBDR beta-barrel domain is found at 173–743 (QDFTEVQAGI…SAMLTFKLSY (571 aa)). Positions 726–743 (YAALGPGRSAMLTFKLSY) match the TonB C-terminal box motif.

This sequence belongs to the TonB-dependent receptor family.

The protein localises to the cell outer membrane. Functionally, probably involved in iron transport. In Bordetella pertussis (strain Tohama I / ATCC BAA-589 / NCTC 13251), this protein is Probable TonB-dependent receptor BfrD (bfrD).